Consider the following 173-residue polypeptide: MDIEKVNSMDLGEFVDVFGNATERCPLIAAAVWSQRPFSDLEDLEKHFFAFIDALAQSGQEGILRCHPDLAGSELQRGTLTAESQREQSGAGLRSLGADERLRLAELNAQYRARFGFPFVLAARFSDRTAVPRELARRLLCPSAQELRTALGEVKKIGSLRLADLLRADPAKL.

Catalysis depends on histidine 67, which acts as the Proton donor. Residues proline 68, 84-88 (SQREQ), and 119-123 (FVLAA) each bind substrate. A Microbody targeting signal motif is present at residues 171–173 (AKL).

The protein belongs to the OHCU decarboxylase family. Apparently not expressed.

It is found in the peroxisome. It catalyses the reaction 5-hydroxy-2-oxo-4-ureido-2,5-dihydro-1H-imidazole-5-carboxylate + H(+) = (S)-allantoin + CO2. The protein operates within purine metabolism; urate degradation; (S)-allantoin from urate: step 3/3. Functionally, catalyzes the stereoselective decarboxylation of 2-oxo-4-hydroxy-4-carboxy-5-ureidoimidazoline (OHCU) to (S)-allantoin. This is Putative 2-oxo-4-hydroxy-4-carboxy-5-ureidoimidazoline decarboxylase (URAD) from Homo sapiens (Human).